A 306-amino-acid chain; its full sequence is UDP-3-O-acyl-N-acetylglucosamine deacetylase (306 aa).

3 residues coordinate Zn(2+): His79, His238, and Asp242. Catalysis depends on His265, which acts as the Proton donor.

This sequence belongs to the LpxC family. Zn(2+) serves as cofactor.

It carries out the reaction a UDP-3-O-[(3R)-3-hydroxyacyl]-N-acetyl-alpha-D-glucosamine + H2O = a UDP-3-O-[(3R)-3-hydroxyacyl]-alpha-D-glucosamine + acetate. It participates in glycolipid biosynthesis; lipid IV(A) biosynthesis; lipid IV(A) from (3R)-3-hydroxytetradecanoyl-[acyl-carrier-protein] and UDP-N-acetyl-alpha-D-glucosamine: step 2/6. Its function is as follows. Catalyzes the hydrolysis of UDP-3-O-myristoyl-N-acetylglucosamine to form UDP-3-O-myristoylglucosamine and acetate, the committed step in lipid A biosynthesis. The chain is UDP-3-O-acyl-N-acetylglucosamine deacetylase from Shewanella violacea (strain JCM 10179 / CIP 106290 / LMG 19151 / DSS12).